A 150-amino-acid polypeptide reads, in one-letter code: Globin-1 (150 aa).

Positions 11-150 constitute a Globin domain; sequence ALTAAEKATI…MICILLRSSY (140 aa). Heme b contacts are provided by H74 and H106.

It belongs to the globin family. In terms of assembly, monomer.

The protein is Globin-1 of Petromyzon marinus (Sea lamprey).